We begin with the raw amino-acid sequence, 445 residues long: Phosphatidate cytidylyltransferase 2 (445 aa).

Over residues 1 to 39 (MTELRQRVAHEPVAPPEDKESESEAKVDGETASDSESRA) the composition is skewed to basic and acidic residues. The interval 1–49 (MTELRQRVAHEPVAPPEDKESESEAKVDGETASDSESRAESAPLPVSAD) is disordered. S21 bears the Phosphoserine mark. T31 carries the phosphothreonine modification. Phosphoserine is present on residues S33, S35, and S37. T51 is modified (phosphothreonine). The next 6 helical transmembrane spans lie at 79-99 (MIAF…IIVM), 132-152 (FLLC…FFTL), 166-186 (HRFI…LSLV), 213-233 (LVIH…SCVI), 262-282 (GFIG…YVMS), and 340-360 (IALS…ASGF).

This sequence belongs to the CDS family. In terms of assembly, homodimer. Widely expressed. Expressed in heart, brain and retina, and to a lesser extent in placenta, lung, liver, skeletal muscle, kidney and pancreas.

The protein localises to the endoplasmic reticulum membrane. It carries out the reaction a 1,2-diacyl-sn-glycero-3-phosphate + CTP + H(+) = a CDP-1,2-diacyl-sn-glycerol + diphosphate. The catalysed reaction is 1-octadecanoyl-2-(5Z,8Z,11Z,14Z-eicosatetraenoyl)-sn-glycero-3-phosphate + CTP + H(+) = 1-octadecanoyl-2-(5Z,8Z,11Z,14Z-eicosatetraenoyl)-sn-glycero-3-cytidine-5'-diphosphate + diphosphate. The enzyme catalyses 1-octadecanoyl-2-(9Z,12Z-octadecadienoyl)-sn-glycero-3-phosphate + CTP + H(+) = 1-octadecanoyl-2-(9Z,12Z-octadecadienoyl)-sn-glycero-3-cytidine-5'-diphosphate + diphosphate. It catalyses the reaction 1-hexadecanoyl-2-(5Z,8Z,11Z,14Z-eicosatetraenoyl)-sn-glycero-3-phosphate + CTP + H(+) = 1-hexadecanoyl-2-(5Z,8Z,11Z,14Z-eicosatetraenoyl)-sn-glycero-3-cytidine-5'-diphosphate + diphosphate. It carries out the reaction 1,2-di-(5Z,8Z,11Z,14Z)-eicosatetraenoyl-sn-glycero-3-phosphate + CTP + H(+) = 1,2-di-(5Z,8Z,11Z,14Z-eicosatetraenoyl)-sn-glycero-3-cytidine-5'-diphosphate + diphosphate. The catalysed reaction is 1-octadecanoyl-2-(9Z-octadecenoyl)-sn-glycero-3-phosphate + CTP + H(+) = 1-octadecanoyl-2-(9Z-octadecenoyl)-sn-glycero-3-cytidine-5'-diphosphate + diphosphate. The enzyme catalyses 1-octadecanoyl-2-(4Z,7Z,10Z,13Z,16Z,19Z-docosahexaenoyl)-sn-glycero-3-phosphate + CTP + H(+) = 1-octadecanoyl-2-(4Z,7Z,10Z,13Z,16Z,19Z-docosahexaenoyl)-sn-glycero-3-cytidine-5'-diphosphate + diphosphate. It catalyses the reaction 1,2-di-(9Z,12Z-octadecadienoyl)-sn-glycero-3-phosphate + CTP + H(+) = 1,2-di-(9Z,12Z-octadecadienoyl)-sn-glycero-3-cytidine-5'-diphosphate + diphosphate. It carries out the reaction 1,2-di-(9Z-octadecenoyl)-sn-glycero-3-phosphate + CTP + H(+) = 1,2-di-(9Z-octadecenoyl)-sn-glycero-3-cytidine-5'-diphosphate + diphosphate. It participates in phospholipid metabolism; CDP-diacylglycerol biosynthesis; CDP-diacylglycerol from sn-glycerol 3-phosphate: step 3/3. Its activity is regulated as follows. Inhibited by its anionic phospholipid end products, with phosphatidylinositol-(4,5)- bisphosphate (PIP2) showing the strongest inhibition. Inhibition is also acyl chain specific, with 1-stearoyl-2-arachidonoyl-snphosphatidylinositol showing the strongest inhibition. Catalyzes the conversion of phosphatidic acid (PA) to CDP-diacylglycerol (CDP-DAG), an essential intermediate in the synthesis of phosphatidylglycerol, cardiolipin and phosphatidylinositol. Exhibits specificity for the nature of the acyl chains at the sn-1 and sn-2 positions in the substrate, PA and the preferred acyl chain composition is 1-stearoyl-2-arachidonoyl-sn-phosphatidic acid. Plays an important role in regulating the growth and maturation of lipid droplets which are storage organelles at the center of lipid and energy homeostasis. The chain is Phosphatidate cytidylyltransferase 2 from Homo sapiens (Human).